Here is a 334-residue protein sequence, read N- to C-terminus: Ketol-acid reductoisomerase (NADP(+)) (334 aa).

The region spanning 1 to 181 (MNRYYDKNAD…GGGRTGILET (181 aa)) is the KARI N-terminal Rossmann domain. NADP(+) contacts are provided by residues 24-27 (YGSQ), R47, S50, S52, and 82-85 (DEFQ). H107 is a catalytic residue. G133 lines the NADP(+) pocket. The 142-residue stretch at 182–323 (SFKDETETDL…ESLRSMMPWI (142 aa)) folds into the KARI C-terminal knotted domain. Mg(2+) is bound by residues D190, E194, E226, and E230. Residue S251 coordinates substrate.

Belongs to the ketol-acid reductoisomerase family. Requires Mg(2+) as cofactor.

It carries out the reaction (2R)-2,3-dihydroxy-3-methylbutanoate + NADP(+) = (2S)-2-acetolactate + NADPH + H(+). It catalyses the reaction (2R,3R)-2,3-dihydroxy-3-methylpentanoate + NADP(+) = (S)-2-ethyl-2-hydroxy-3-oxobutanoate + NADPH + H(+). It functions in the pathway amino-acid biosynthesis; L-isoleucine biosynthesis; L-isoleucine from 2-oxobutanoate: step 2/4. Its pathway is amino-acid biosynthesis; L-valine biosynthesis; L-valine from pyruvate: step 2/4. Functionally, involved in the biosynthesis of branched-chain amino acids (BCAA). Catalyzes an alkyl-migration followed by a ketol-acid reduction of (S)-2-acetolactate (S2AL) to yield (R)-2,3-dihydroxy-isovalerate. In the isomerase reaction, S2AL is rearranged via a Mg-dependent methyl migration to produce 3-hydroxy-3-methyl-2-ketobutyrate (HMKB). In the reductase reaction, this 2-ketoacid undergoes a metal-dependent reduction by NADPH to yield (R)-2,3-dihydroxy-isovalerate. The polypeptide is Ketol-acid reductoisomerase (NADP(+)) (Ruthia magnifica subsp. Calyptogena magnifica).